Here is a 346-residue protein sequence, read N- to C-terminus: Dihydroorotate dehydrogenase (quinone) (346 aa).

Residues Ala62–Lys66 and Thr86 each bind FMN. Lys66 provides a ligand contact to substrate. Asn111 to Phe115 serves as a coordination point for substrate. FMN-binding residues include Asn142 and Asn175. Residue Asn175 participates in substrate binding. The active-site Nucleophile is the Ser178. Position 180 (Asn180) interacts with substrate. Positions 211 and 239 each coordinate FMN. Asn240 to Thr241 contacts substrate. Residues Gly261, Gly289, and Tyr310 to Thr311 each bind FMN.

It belongs to the dihydroorotate dehydrogenase family. Type 2 subfamily. Monomer. It depends on FMN as a cofactor.

The protein localises to the cell membrane. It carries out the reaction (S)-dihydroorotate + a quinone = orotate + a quinol. It participates in pyrimidine metabolism; UMP biosynthesis via de novo pathway; orotate from (S)-dihydroorotate (quinone route): step 1/1. Its function is as follows. Catalyzes the conversion of dihydroorotate to orotate with quinone as electron acceptor. This is Dihydroorotate dehydrogenase (quinone) from Thermus thermophilus (strain ATCC 27634 / DSM 579 / HB8).